A 288-amino-acid polypeptide reads, in one-letter code: Probable anion import ATP-binding protein HVO_1886 (288 aa).

Residues 1–18 (MTTERPDAGDSGSEKPDE) are compositionally biased toward basic and acidic residues. The interval 1-33 (MTTERPDAGDSGSEKPDETAAPDPAANGARRSK) is disordered. The 247-residue stretch at 36–282 (LAARSLGHGF…PDDDRVRQFV (247 aa)) folds into the ABC transporter domain. 68–75 (GPSGTGKT) is an ATP binding site.

Belongs to the ABC transporter superfamily. As to quaternary structure, the complex is composed of two ATP-binding proteins (HVO_1886), two transmembrane proteins (HVO_1887) and a solute-binding protein (HVO_1888).

The protein resides in the cell membrane. In terms of biological role, part of an ABC transporter complex involved in anions import. Responsible for energy coupling to the transport system. This Haloferax volcanii (strain ATCC 29605 / DSM 3757 / JCM 8879 / NBRC 14742 / NCIMB 2012 / VKM B-1768 / DS2) (Halobacterium volcanii) protein is Probable anion import ATP-binding protein HVO_1886.